We begin with the raw amino-acid sequence, 214 residues long: Avenin (214 aa).

Positions 1–28 (MKIFFFLALLALVVSATFAQYAESDGSY) are cleaved as a signal peptide. Positions 180–214 (RGQESGVFTPKFTQTSFQPYPEGEDESSLINKASE) are disordered.

Functionally, seed storage protein. The sequence is that of Avenin from Avena sativa (Oat).